A 343-amino-acid chain; its full sequence is Endoglucanase C (343 aa).

Glu140 functions as the Proton donor in the catalytic mechanism. Glu280 serves as the catalytic Nucleophile.

It belongs to the glycosyl hydrolase 5 (cellulase A) family.

The catalysed reaction is Endohydrolysis of (1-&gt;4)-beta-D-glucosidic linkages in cellulose, lichenin and cereal beta-D-glucans.. It functions in the pathway glycan metabolism; cellulose degradation. Its function is as follows. This enzyme catalyzes the endohydrolysis of 1,4-beta-glucosidic linkages in cellulose, lichenin and cereal beta-D-glucans. The protein is Endoglucanase C (celC) of Acetivibrio thermocellus (strain ATCC 27405 / DSM 1237 / JCM 9322 / NBRC 103400 / NCIMB 10682 / NRRL B-4536 / VPI 7372) (Clostridium thermocellum).